Reading from the N-terminus, the 145-residue chain is Deoxyuridine 5'-triphosphate nucleotidohydrolase (145 aa).

Substrate is bound by residues 63 to 65 (RSG), Asn76, and 80 to 82 (TID).

Belongs to the dUTPase family. Mg(2+) serves as cofactor.

It carries out the reaction dUTP + H2O = dUMP + diphosphate + H(+). Its pathway is pyrimidine metabolism; dUMP biosynthesis; dUMP from dCTP (dUTP route): step 2/2. Its function is as follows. This enzyme is involved in nucleotide metabolism: it produces dUMP, the immediate precursor of thymidine nucleotides and it decreases the intracellular concentration of dUTP so that uracil cannot be incorporated into DNA. In Chlamydia pneumoniae (Chlamydophila pneumoniae), this protein is Deoxyuridine 5'-triphosphate nucleotidohydrolase.